We begin with the raw amino-acid sequence, 93 residues long: MSFLGFGGGQPQLSSQQKIQAAEAELDLVTDMFNKLVNNCYKKCINTSYSEGELNKNESSCLDRCVAKYFETNVQVGENMQKMGQSFNAAGKF.

Positions 1-31 (MSFLGFGGGQPQLSSQQKIQAAEAELDLVTD) are interaction with transmembrane regions of transmembrane proteins in transit. Residues 40 to 65 (CYKKCINTSYSEGELNKNESSCLDRC) carry the Twin CX3C motif motif. Disulfide bonds link C40–C65 and C44–C61. Residues 73–93 (NVQVGENMQKMGQSFNAAGKF) form a required for heterohexamerization region.

The protein belongs to the small Tim family. Heterohexamer; composed of 3 copies of TIM9 and 3 copies of TIM10, named soluble 70 kDa complex. Associates directly with the TIM12 component of the TIM22 complex, whose core is composed of TIM18, TIM22 and TIM54. Interacts with the transmembrane regions of multi-pass transmembrane proteins in transit.

The protein resides in the mitochondrion inner membrane. The protein localises to the mitochondrion intermembrane space. Functionally, mitochondrial intermembrane chaperone that participates in the import and insertion of multi-pass transmembrane proteins into the mitochondrial inner membrane. Also required for the transfer of beta-barrel precursors from the TOM complex to the sorting and assembly machinery (SAM complex) of the outer membrane. Acts as a chaperone-like protein that protects the hydrophobic precursors from aggregation and guide them through the mitochondrial intermembrane space. Compared to TIM9, it may function as a substrate sensor. The chain is Mitochondrial import inner membrane translocase subunit TIM10 (TIM10) from Saccharomyces cerevisiae (strain ATCC 204508 / S288c) (Baker's yeast).